The sequence spans 141 residues: uncharacterized protein (141 aa).

This is an uncharacterized protein from Thermoproteus tenax (TTV1).